The following is a 389-amino-acid chain: N-terminal EF-hand calcium-binding protein 2 (389 aa).

At Arg10 the chain carries Omega-N-methylarginine. The residue at position 42 (Arg42) is an Asymmetric dimethylarginine. EF-hand domains are found at residues 63-98 (GGTA…GVLN) and 99-132 (EKEL…HMGD). Residues Asp76, Asn78, Asp80, Lys82, Glu87, Asp110, Asp112, Thr114, His116, and Glu121 each coordinate Ca(2+). Residues 173–198 (LKETANQIQSLLSSVESAVEAIEEQT) are a coiled coil. The ABM domain occupies 289–377 (QLVRQEMAVC…LSQPEALSQI (89 aa)).

Interacts (calcium-dependent) with ADORA2A and GRM5. Expressed in the iris, in the ciliary margin of the retina and in the inner portion of the neural retina. Expressed in the spinal dorsal horn with especially strong expression in lamina IIi; found in excitory synaptic boutons (at protein level).

Its subcellular location is the cytoplasm. It localises to the cell projection. It is found in the dendrite. The protein resides in the axon. The protein localises to the cell membrane. Its function is as follows. May act as a signaling scaffold protein that senses intracellular calcium. Can modulate ligand-induced internalization of ADORA2A and coupling efficiency of mGluR5/GRM5; for both receptors may regulate signaling activity such as promoting MAPK1/3 (ERK1/2) activation. The protein is N-terminal EF-hand calcium-binding protein 2 (Necab2) of Mus musculus (Mouse).